Here is a 520-residue protein sequence, read N- to C-terminus: ATP synthase subunit alpha (520 aa).

An ATP-binding site is contributed by 169 to 176 (GDRKTGKT).

This sequence belongs to the ATPase alpha/beta chains family. F-type ATPases have 2 components, CF(1) - the catalytic core - and CF(0) - the membrane proton channel. CF(1) has five subunits: alpha(3), beta(3), gamma(1), delta(1), epsilon(1). CF(0) has three main subunits: a(1), b(2) and c(9-12). The alpha and beta chains form an alternating ring which encloses part of the gamma chain. CF(1) is attached to CF(0) by a central stalk formed by the gamma and epsilon chains, while a peripheral stalk is formed by the delta and b chains.

It localises to the cell membrane. The catalysed reaction is ATP + H2O + 4 H(+)(in) = ADP + phosphate + 5 H(+)(out). Its function is as follows. Produces ATP from ADP in the presence of a proton gradient across the membrane. The alpha chain is a regulatory subunit. This chain is ATP synthase subunit alpha, found in Oenococcus oeni (strain ATCC BAA-331 / PSU-1).